The chain runs to 197 residues: MQKVVLATGNAGKVRELASLLSDFGLDIVAQTDLGVDSAEETGLTFIENAILKARHAAKVTGLPAIADDSGLAVDALGGAPGIYSARYSGEDATDQKNLQKLLETLKDVPDDQRQARFHCVLVYLRHAEDPTPLVCHGSWPGVITREPAGTGGFGYDPIFFVPSEGKTAAELTREEKSAISHRGQALKLLLDALRNG.

Substrate is bound at residue 8–13 (TGNAGK). 2 residues coordinate Mg(2+): glutamate 40 and aspartate 69. Aspartate 69 serves as the catalytic Proton acceptor. Substrate is bound by residues serine 70, 154-157 (FGYD), lysine 177, and 182-183 (HR).

Belongs to the HAM1 NTPase family. Homodimer. Mg(2+) is required as a cofactor.

The catalysed reaction is XTP + H2O = XMP + diphosphate + H(+). It catalyses the reaction dITP + H2O = dIMP + diphosphate + H(+). The enzyme catalyses ITP + H2O = IMP + diphosphate + H(+). In terms of biological role, pyrophosphatase that catalyzes the hydrolysis of nucleoside triphosphates to their monophosphate derivatives, with a high preference for the non-canonical purine nucleotides XTP (xanthosine triphosphate), dITP (deoxyinosine triphosphate) and ITP. Seems to function as a house-cleaning enzyme that removes non-canonical purine nucleotides from the nucleotide pool, thus preventing their incorporation into DNA/RNA and avoiding chromosomal lesions. In Shigella flexneri, this protein is dITP/XTP pyrophosphatase (rdgB).